Reading from the N-terminus, the 169-residue chain is MKLFFSIVLLVITLDQFTKKLALTFLRDGVQSITIIADLFSLTYAENRGVAFGLEFAPPTVLLLLTGVITIMVLAYVIWSKNRTTLFLLPFALITGGGIGNMIDRVMYGKVVDFIYFDLYQGHIFGRWVSLWPIFNIADSAITIGACMLMIFHNKLFPAESPTGTTDVR.

The next 2 helical transmembrane spans lie at 59 to 79 (PTVL…YVIW) and 84 to 104 (TTLF…NMID). Catalysis depends on residues aspartate 113 and aspartate 139. Residues 132 to 152 (WPIFNIADSAITIGACMLMIF) traverse the membrane as a helical segment.

The protein belongs to the peptidase A8 family.

It localises to the cell inner membrane. The enzyme catalyses Release of signal peptides from bacterial membrane prolipoproteins. Hydrolyzes -Xaa-Yaa-Zaa-|-(S,diacylglyceryl)Cys-, in which Xaa is hydrophobic (preferably Leu), and Yaa (Ala or Ser) and Zaa (Gly or Ala) have small, neutral side chains.. It participates in protein modification; lipoprotein biosynthesis (signal peptide cleavage). Functionally, this protein specifically catalyzes the removal of signal peptides from prolipoproteins. In Pelodictyon phaeoclathratiforme (strain DSM 5477 / BU-1), this protein is Lipoprotein signal peptidase.